A 798-amino-acid chain; its full sequence is Transferrin receptor protein 2 (798 aa).

The Cytoplasmic portion of the chain corresponds to Met-1–Pro-81. Positions Tyr-23–Val-26 match the Endocytosis signal motif. Positions Arg-25–Glu-44 are disordered. A compositionally biased stretch (acidic residues) spans Asn-33–Glu-44. The chain crosses the membrane as a helical; Signal-anchor for type II membrane protein span at residues Tyr-82 to Phe-102. At Arg-103–Phe-798 the chain is on the extracellular side. 3 N-linked (GlcNAc...) asparagine glycosylation sites follow: Asn-235, Asn-334, and Asn-535.

Belongs to the peptidase M28 family. M28B subfamily. In terms of assembly, homodimer.

It is found in the cell membrane. In terms of biological role, mediates cellular uptake of transferrin-bound iron in a non-iron dependent manner. May be involved in iron metabolism, hepatocyte function and erythrocyte differentiation. In Rattus norvegicus (Rat), this protein is Transferrin receptor protein 2 (Tfr2).